Here is a 317-residue protein sequence, read N- to C-terminus: Glucokinase (317 aa).

It belongs to the ROK (NagC/XylR) family. As to quaternary structure, homodimer. Requires a divalent metal cation as cofactor.

It catalyses the reaction D-glucose + ATP = D-glucose 6-phosphate + ADP + H(+). Functionally, catalyzes the phosphorylation of D-glucose to D-glucose 6-phosphate using ATP as the phosphate donor. Can also phosphorylate 2-deoxyglucose, with lower efficiency. ITP can also serve as a phosphoryl donor. In Thermotoga maritima (strain ATCC 43589 / DSM 3109 / JCM 10099 / NBRC 100826 / MSB8), this protein is Glucokinase.